Reading from the N-terminus, the 153-residue chain is Ribosomal RNA large subunit methyltransferase H (153 aa).

S-adenosyl-L-methionine-binding positions include Leu70, Gly102, and 121 to 126 (LSRMTF).

The protein belongs to the RNA methyltransferase RlmH family. As to quaternary structure, homodimer.

It is found in the cytoplasm. It catalyses the reaction pseudouridine(1915) in 23S rRNA + S-adenosyl-L-methionine = N(3)-methylpseudouridine(1915) in 23S rRNA + S-adenosyl-L-homocysteine + H(+). In terms of biological role, specifically methylates the pseudouridine at position 1915 (m3Psi1915) in 23S rRNA. This chain is Ribosomal RNA large subunit methyltransferase H, found in Geotalea uraniireducens (strain Rf4) (Geobacter uraniireducens).